The sequence spans 107 residues: Phosphoribosyl-ATP pyrophosphatase (107 aa).

This sequence belongs to the PRA-PH family.

Its subcellular location is the cytoplasm. The catalysed reaction is 1-(5-phospho-beta-D-ribosyl)-ATP + H2O = 1-(5-phospho-beta-D-ribosyl)-5'-AMP + diphosphate + H(+). Its pathway is amino-acid biosynthesis; L-histidine biosynthesis; L-histidine from 5-phospho-alpha-D-ribose 1-diphosphate: step 2/9. This is Phosphoribosyl-ATP pyrophosphatase from Bacillus thuringiensis (strain Al Hakam).